The chain runs to 387 residues: S-adenosylmethionine synthase (387 aa).

H16 is a binding site for ATP. D18 is a Mg(2+) binding site. E44 lines the K(+) pocket. L-methionine contacts are provided by E57 and Q100. The tract at residues 100–110 (QSADIAVGVDE) is flexible loop. ATP is bound by residues 165–167 (DAK), D241, 247–248 (RK), A264, and K268. D241 is an L-methionine binding site. K272 contributes to the L-methionine binding site.

Belongs to the AdoMet synthase family. Homotetramer; dimer of dimers. Requires Mg(2+) as cofactor. It depends on K(+) as a cofactor.

The protein resides in the cytoplasm. The enzyme catalyses L-methionine + ATP + H2O = S-adenosyl-L-methionine + phosphate + diphosphate. It participates in amino-acid biosynthesis; S-adenosyl-L-methionine biosynthesis; S-adenosyl-L-methionine from L-methionine: step 1/1. In terms of biological role, catalyzes the formation of S-adenosylmethionine (AdoMet) from methionine and ATP. The overall synthetic reaction is composed of two sequential steps, AdoMet formation and the subsequent tripolyphosphate hydrolysis which occurs prior to release of AdoMet from the enzyme. In Marinomonas sp. (strain MWYL1), this protein is S-adenosylmethionine synthase.